A 1464-amino-acid polypeptide reads, in one-letter code: DNA-directed RNA polymerase subunit beta' (1464 aa).

Residues Cys66, Cys68, Cys96, and Cys99 each contribute to the Zn(2+) site. Asp491, Asp493, and Asp495 together coordinate Mg(2+). Zn(2+) is bound by residues Cys838, Cys912, Cys919, and Cys922. Residues 1143-1200 (NDDDDDDYYDSDYYDYYDYSDDDDDYDDYDDYYYNYDDDENDNDNDYDYDYDYDYDYD) are compositionally biased toward acidic residues. The interval 1143-1229 (NDDDDDDYYD…YDYDYDSDSD (87 aa)) is disordered. Low complexity predominate over residues 1204-1219 (HNSYSHNSYSPSSNDN). The segment covering 1220–1229 (YDYDYDSDSD) has biased composition (acidic residues).

Belongs to the RNA polymerase beta' chain family. In terms of assembly, the RNAP catalytic core consists of 2 alpha, 1 beta, 1 beta' and 1 omega subunit. When a sigma factor is associated with the core the holoenzyme is formed, which can initiate transcription. Requires Mg(2+) as cofactor. It depends on Zn(2+) as a cofactor.

It carries out the reaction RNA(n) + a ribonucleoside 5'-triphosphate = RNA(n+1) + diphosphate. Its function is as follows. DNA-dependent RNA polymerase catalyzes the transcription of DNA into RNA using the four ribonucleoside triphosphates as substrates. This chain is DNA-directed RNA polymerase subunit beta', found in Karelsulcia muelleri (strain GWSS) (Sulcia muelleri).